Reading from the N-terminus, the 236-residue chain is ATP-dependent dethiobiotin synthetase BioD (236 aa).

A Mg(2+)-binding site is contributed by T19. K40 is an active-site residue. Mg(2+) is bound by residues D61 and E122. ATP contacts are provided by residues D61, 122–125 (EGVG), 182–183 (NT), and 211–213 (PRL).

It belongs to the dethiobiotin synthetase family. As to quaternary structure, homodimer. Requires Mg(2+) as cofactor.

It is found in the cytoplasm. The enzyme catalyses (7R,8S)-7,8-diammoniononanoate + CO2 + ATP = (4R,5S)-dethiobiotin + ADP + phosphate + 3 H(+). The protein operates within cofactor biosynthesis; biotin biosynthesis; biotin from 7,8-diaminononanoate: step 1/2. In terms of biological role, catalyzes a mechanistically unusual reaction, the ATP-dependent insertion of CO2 between the N7 and N8 nitrogen atoms of 7,8-diaminopelargonic acid (DAPA, also called 7,8-diammoniononanoate) to form a ureido ring. The sequence is that of ATP-dependent dethiobiotin synthetase BioD from Janthinobacterium sp. (strain Marseille) (Minibacterium massiliensis).